Here is a 514-residue protein sequence, read N- to C-terminus: Ubiquitin carboxyl-terminal hydrolase 22 (514 aa).

Residues 10–127 (PGCAHLGSFK…KEEQRKAWKM (118 aa)) form a UBP-type zinc finger. Residues C12, H14, C52, C55, C65, C68, C73, H78, H82, H88, C101, and C104 each coordinate Zn(2+). An N6-acetyllysine modification is found at K118. T136 is modified (phosphothreonine). Residues 165–509 (RGLINLGNTC…EGYLLFYHKQ (345 aa)) form the USP domain. Catalysis depends on C174, which acts as the Nucleophile. Residue S226 is modified to Phosphoserine. The active-site Proton acceptor is the H468.

The protein belongs to the peptidase C19 family. UBP8 subfamily. In terms of assembly, component of some SAGA transcription coactivator-HAT complexes, at least composed of ATXN7, ATXN7L3, ENY2, GCN5L2, SUPT3H, TAF10, TRRAP and USP22. Within the SAGA complex, ATXN7L3, ENY2 and USP22 form a subcomplex required for histone deubiquitination. Interacts directly with ATXN7L3; leading to its recruitment to the SAGA complex. Interacts with ATXN7L3 and weakly with ATXN7L3B. Interacts with MED1. Phosphorylated in G2/M phase, but not in G1 phase by CDK1. In terms of processing, ubiquitinated and subsequently degraded in a CDC20-dependent manner.

Its subcellular location is the nucleus. It localises to the cytoplasm. It catalyses the reaction Thiol-dependent hydrolysis of ester, thioester, amide, peptide and isopeptide bonds formed by the C-terminal Gly of ubiquitin (a 76-residue protein attached to proteins as an intracellular targeting signal).. Its function is as follows. Deubiquitinase that plays a role in several cellular processes including transcriptional regulation, cell cycle progression or innate immunity. As part of the transcription regulatory histone acetylation (HAT) complex SAGA, catalyzes the deubiquitination of both histones H2A and H2B, thereby acting as a transcriptional coactivator. Recruited to specific gene promoters by activators such as MYC, where it is required for transcription. Facilitates cell-cycle progression by stabilizing CCNB1 and antagonizing its proteasome-mediated degradation in a cell cycle-specific manner. Modulates cell cycle progression and apoptosis also by antagonizing TP53 transcriptional activation through deacetylase SIRT1 stabilization. Plays multiple roles in immunity and inflammation. Participates in antiviral response by deubiquitinating the importin KPNA2, leading to IRF3 nuclear translocation and subsequent type I interferon production. Acts as a central regulator of type III IFN signaling by negatively regulating STING1 activation and ubiquitination. Inhibits NLRP3 inflammasome activation by promoting NLRP3 degradation through ATG5-dependent autophagy. Deubiquitinates CD274 to induce its stabilization and thereby participates in maintenance of immune tolerance to self. Controls necroptotic cell death by regulating RIPK3 phosphorylation and ubiquitination. During bacterial infection, promotes pro-inflammatory response by targeting TRAF6 and removing its 'Lys-48'-linked polyubiquitination. The polypeptide is Ubiquitin carboxyl-terminal hydrolase 22 (USP22) (Bos taurus (Bovine)).